We begin with the raw amino-acid sequence, 83 residues long: ATP synthase subunit c, chloroplastic (83 aa).

2 consecutive transmembrane segments (helical) span residues 4–24 (IISA…AIGP) and 57–77 (LAFM…LLFA).

This sequence belongs to the ATPase C chain family. In terms of assembly, F-type ATPases have 2 components, F(1) - the catalytic core - and F(0) - the membrane proton channel. F(1) has five subunits: alpha(3), beta(3), gamma(1), delta(1), epsilon(1). F(0) has four main subunits: a(1), b(1), b'(1) and c(10-14). The alpha and beta chains form an alternating ring which encloses part of the gamma chain. F(1) is attached to F(0) by a central stalk formed by the gamma and epsilon chains, while a peripheral stalk is formed by the delta, b and b' chains.

The protein resides in the plastid. It is found in the chloroplast thylakoid membrane. Functionally, f(1)F(0) ATP synthase produces ATP from ADP in the presence of a proton or sodium gradient. F-type ATPases consist of two structural domains, F(1) containing the extramembraneous catalytic core and F(0) containing the membrane proton channel, linked together by a central stalk and a peripheral stalk. During catalysis, ATP synthesis in the catalytic domain of F(1) is coupled via a rotary mechanism of the central stalk subunits to proton translocation. Its function is as follows. Key component of the F(0) channel; it plays a direct role in translocation across the membrane. A homomeric c-ring of between 10-14 subunits forms the central stalk rotor element with the F(1) delta and epsilon subunits. The protein is ATP synthase subunit c, chloroplastic of Galdieria sulphuraria (Red alga).